The chain runs to 330 residues: MDIYNDKGLQTIKLFNNEFDCIRNDIRELFKHVTDSDSIQLPMEDNSDIIENIRKILYRRLKNVECVDIDSTITFMKYDPNDDNKRTCSNWVPLTNNYMEYCLVIYLETPICGGKIKLYHPTGNIKSDKDIMFAKTLDFKSKKVLTGRKTIAVLDISVSYNRSMTTIHYGDVDIDIHTDKNGKELCYCYITIDDHYLVNVETIGVIVNRSGKCLLVNNHLGIGIVKDKRISDSFGDVCMDTIFDFSEARELFSLTNDDNRNIAWDTDKLDDDTDIWTPVTEDDYKFLSRLVLYAKSQSDTVFDHYVLTGDTEPPTVFIFKVTRFYFNILK.

The protein belongs to the poxviridae C4/C10 protein family.

This is Protein C10 from Homo sapiens (Human).